We begin with the raw amino-acid sequence, 465 residues long: Mothers against decapentaplegic homolog 5 (465 aa).

Residue threonine 2 is modified to N-acetylthreonine. In terms of domain architecture, MH1 spans 13-137 (PAVKRLLGWK…YKRVESPVLP (125 aa)). Residues cysteine 65, cysteine 110, cysteine 122, and histidine 127 each contribute to the Zn(2+) site. The segment at 163 to 251 (NEPHMPQNAT…DTSSNMIPQT (89 aa)) is disordered. The segment covering 169 to 182 (QNATFPDSFHQPNN) has biased composition (polar residues). A compositionally biased stretch (pro residues) spans 186–197 (PLSPNSPYPPSP). Residues 198–214 (ASSTYPNSPASSGPGSP) show a composition bias toward low complexity. Residues 237–251 (NSQPMDTSSNMIPQT) are compositionally biased toward polar residues. The MH2 domain occupies 271–465 (WCSIVYYELN…SPLNPISSVS (195 aa)). 2 positions are modified to phosphoserine: serine 463 and serine 465.

It belongs to the dwarfin/SMAD family. In terms of assembly, homodimer. Forms trimers with the co-SMAD SMAD4. Interacts with PEBP2-alpha subunit and SMURF1. Interacts with SUV39H1 and SUV39H2. Interacts (via MH2 domain) with LEMD3. Interacts with WWP1. Interacts with TMEM119. Interacts with ZNF8. Interacts with RANBP3L. Interacts with HK1. Interacts with HGS; this interaction attenuates BMP signaling. Phosphorylated on serine by BMP (bone morphogenetic proteins) type 1 receptor kinase. Post-translationally, ubiquitin-mediated proteolysis by SMAD-specific E3 ubiquitin ligase SMURF1. In terms of tissue distribution, predominantly expressed in mesenchyme and somites during embryogenesis, and present in many tissues of the adult.

It is found in the cytoplasm. The protein localises to the nucleus. The protein resides in the mitochondrion. Functionally, transcriptional regulator that plays a role in various cellular processes including embryonic development, cell differentiation, angiogenesis and tissue homeostasis. Upon BMP ligand binding to their receptors at the cell surface, is phosphorylated by activated type I BMP receptors (BMPRIs) and associates with SMAD4 to form a heteromeric complex which translocates into the nucleus acting as transcription factor. In turn, the hetero-trimeric complex recognizes cis-regulatory elements containing Smad Binding Elements (SBEs) to modulate the outcome of the signaling network. Non-phosphorylated SMAD5 has a cytoplasmic role in energy metabolism regulation by promoting mitochondrial respiration and glycolysis in response to cytoplasmic pH changes. Mechanistically, interacts with hexokinase 1/HK1 and thereby accelerates glycolysis. The protein is Mothers against decapentaplegic homolog 5 (Smad5) of Mus musculus (Mouse).